The sequence spans 543 residues: Zinc finger CCCH-type with G patch domain-containing protein (543 aa).

2 disordered regions span residues 55-79 (AATSDDDDAPDTAGRAPPATADNPI) and 95-132 (TEDSAAGEQAGEQTATEPERQPNDDDADNDDDADDKLD). Positions 65–76 (DTAGRAPPATAD) are enriched in low complexity. Positions 118 to 131 (DDDADNDDDADDKL) are enriched in acidic residues. A C3H1-type zinc finger spans residues 186–209 (PCAYFLEGECRFTDEKCRYSHGEV). A disordered region spans residues 272-304 (PFEDLLPLDEDEDGQEAAEDSESDTDGADEEEA). Residues 277–304 (LPLDEDEDGQEAAEDSESDTDGADEEEA) are compositionally biased toward acidic residues. Residues 335 to 381 (TRGIGSKIMQKMGYIVGTGLGREGEGIVVPVSAQVLPQGRSLDYCME) form the G-patch domain. Positions 438 to 460 (GAAGGESSRPNRNRPGALSRQEL) are disordered.

It is found in the nucleus. Functionally, transcription repressor. The protein is Zinc finger CCCH-type with G patch domain-containing protein of Anopheles gambiae (African malaria mosquito).